The following is a 902-amino-acid chain: Adhesion G-protein coupled receptor D1 (902 aa).

A signal peptide spans 1-25; sequence MKKLLPLCCWHSWLLLFYCDFQVRG. At 26-598 the chain is on the extracellular side; the sequence is AHTRSHVHPG…GHQVALSSIS (573 aa). N-linked (GlcNAc...) asparagine glycans are attached at residues Asn-68, Asn-76, Asn-83, Asn-89, Asn-121, Asn-183, Asn-217, Asn-310, Asn-330, Asn-337, Asn-347, Asn-422, Asn-504, Asn-529, and Asn-561. One can recognise a Pentraxin (PTX) domain in the interval 111 to 304; it reads KGVTFLYYRK…VNTMAPTNAY (194 aa). Residues 399 to 585 enclose the GAIN-B domain; the sequence is QVAIVGSSSM…AILMQVVPLE (187 aa). Intrachain disulfides connect Cys-538–Cys-567 and Cys-555–Cys-569. The tract at residues 538-585 is GPS; that stretch reads CAFLDFSSGEGIWSNQGCALTEGNLSYSICRCTHLTNFAILMQVVPLE. Residues 574 to 582 are stachel; sequence NFAILMQVV. Residue Gln-591 participates in 17beta-hydroxy-5alpha-androstan-3-one binding. Residues 599–619 traverse the membrane as a helical segment; it reads YIGCSLSVLCLAITLVTFAVL. Residues 620–630 are Cytoplasmic-facing; it reads SSVSTIRNQRY. A helical transmembrane segment spans residues 631–651; that stretch reads HIHANLSCAVLVAQVLLLISF. Residues 652 to 661 lie on the Extracellular side of the membrane; the sequence is RFEPGTAPCQ. Cys-660 and Cys-732 are joined by a disulfide. Residues 662 to 682 form a helical membrane-spanning segment; it reads VLAMLLHYFFLSAFAWMLVEG. The Cytoplasmic portion of the chain corresponds to 683–702; it reads LHLYSMVIKVFGSEDSKHRY. The helical transmembrane segment at 703 to 723 threads the bilayer; the sequence is YYGIGWGFPLLICIISIVFAM. At 724–739 the chain is on the extracellular side; the sequence is DSYGTSKNCWLSLGNG. Residues 740-760 form a helical membrane-spanning segment; that stretch reads AIWAFVAPALFIIVVNIGILI. Residues 761-788 lie on the Cytoplasmic side of the membrane; it reads AVTRVISQISAENYKIHGDPSAFKLTAK. Residues 789–809 form a helical membrane-spanning segment; the sequence is AVAVLLPILGTSWVFGVLAVN. The Extracellular portion of the chain corresponds to 810–812; the sequence is NQA. The helical transmembrane segment at 813–833 threads the bilayer; sequence MVFQYMFAILNSLQGFFIFLF. Residues 834–902 are Cytoplasmic-facing; that stretch reads HCLLNSEVRA…SGHRVDLSAV (69 aa). Positions 865-902 are disordered; that stretch reads KPFSSDIMNGTRPATGSTRLSPWDKSSHSGHRVDLSAV. Over residues 870–884 the composition is skewed to polar residues; sequence DIMNGTRPATGSTRL. Over residues 889-902 the composition is skewed to basic and acidic residues; it reads KSSHSGHRVDLSAV.

Belongs to the G-protein coupled receptor 2 family. Adhesion G-protein coupled receptor (ADGR) subfamily. As to quaternary structure, heterodimer of 2 chains generated by proteolytic processing; the large extracellular N-terminal fragment and the membrane-bound C-terminal fragment predominantly remain associated and non-covalently linked. Interacts with ESYT1; interaction takes place in absence of cytosolic calcium and inhibits the G protein-coupled receptor activity of ADGRD1. Autoproteolytically processed at the GPS region of the GAIN-B domain; this cleavage modulates receptor activity. Cleavage takes place early in the secretory pathway before N-glycosylation.

The protein localises to the cell membrane. Its activity is regulated as follows. Forms a heterodimer of 2 chains generated by proteolytic processing that remain associated through non-covalent interactions mediated by the GAIN-B domain. In the inactivated receptor, the Stachel sequence (also named stalk) is embedded in the GAIN-B domain, where it adopts a beta-strand conformation. On activation, the Stachel moves into the 7 transmembrane region and adopts a twisted hook-shaped configuration that forms contacts within the receptor, leading to coupling of a G-alpha protein, which activates signaling. The cleaved GAIN-B and N-terminal domains can then dissociate from the rest of the receptor. Interaction with ESYT1 in absence of cytosolic calcium inhibits the G protein-coupled receptor activity; interaction and inhibition is relieved when cytosolic calcium increases. In terms of biological role, adhesion G-protein coupled receptor (aGPCR) for androgen hormone 5alpha-dihydrotestosterone (5alpha-DHT), also named 17beta-hydroxy-5alpha-androstan-3-one, the most potent hormone among androgens. Also activated by methenolone drug. Ligand binding causes a conformation change that triggers signaling via guanine nucleotide-binding proteins (G proteins) and modulates the activity of downstream effectors, such as adenylate cyclase. ADGRD1 is coupled to G(s) G proteins and mediates activation of adenylate cyclase activity. Acts as a 5alpha-DHT receptor in muscle cells, thereby increasing intracellular cyclic AMP (cAMP) levels and enhancing muscle strength. In Bos taurus (Bovine), this protein is Adhesion G-protein coupled receptor D1 (ADGRD1).